The primary structure comprises 361 residues: Phospho-N-acetylmuramoyl-pentapeptide-transferase (361 aa).

10 consecutive transmembrane segments (helical) span residues 26–46 (SILA…VLIQ), 73–93 (TMGG…WGDL), 98–118 (VWLV…DDWI), 139–159 (IFGL…AAVT), 168–188 (IALP…IVGF), 200–220 (GLAI…AYAS), 237–257 (AGDL…FLWF), 264–284 (VFMG…IAVI), 289–309 (LVLV…IIQV), and 339–359 (VIVR…ATLK).

The protein belongs to the glycosyltransferase 4 family. MraY subfamily. It depends on Mg(2+) as a cofactor.

The protein resides in the cell inner membrane. The catalysed reaction is UDP-N-acetyl-alpha-D-muramoyl-L-alanyl-gamma-D-glutamyl-meso-2,6-diaminopimeloyl-D-alanyl-D-alanine + di-trans,octa-cis-undecaprenyl phosphate = di-trans,octa-cis-undecaprenyl diphospho-N-acetyl-alpha-D-muramoyl-L-alanyl-D-glutamyl-meso-2,6-diaminopimeloyl-D-alanyl-D-alanine + UMP. The protein operates within cell wall biogenesis; peptidoglycan biosynthesis. In terms of biological role, catalyzes the initial step of the lipid cycle reactions in the biosynthesis of the cell wall peptidoglycan: transfers peptidoglycan precursor phospho-MurNAc-pentapeptide from UDP-MurNAc-pentapeptide onto the lipid carrier undecaprenyl phosphate, yielding undecaprenyl-pyrophosphoryl-MurNAc-pentapeptide, known as lipid I. The sequence is that of Phospho-N-acetylmuramoyl-pentapeptide-transferase from Xylella fastidiosa (strain 9a5c).